A 291-amino-acid chain; its full sequence is 33 kDa chaperonin (291 aa).

2 disulfides stabilise this stretch: Cys237/Cys239 and Cys270/Cys273.

Belongs to the HSP33 family. In terms of processing, under oxidizing conditions two disulfide bonds are formed involving the reactive cysteines. Under reducing conditions zinc is bound to the reactive cysteines and the protein is inactive.

The protein localises to the cytoplasm. Redox regulated molecular chaperone. Protects both thermally unfolding and oxidatively damaged proteins from irreversible aggregation. Plays an important role in the bacterial defense system toward oxidative stress. The chain is 33 kDa chaperonin from Bacillus cytotoxicus (strain DSM 22905 / CIP 110041 / 391-98 / NVH 391-98).